The following is a 306-amino-acid chain: Pantothenate kinase (306 aa).

Gly91–Ser98 contributes to the ATP binding site.

The protein belongs to the prokaryotic pantothenate kinase family.

It is found in the cytoplasm. It carries out the reaction (R)-pantothenate + ATP = (R)-4'-phosphopantothenate + ADP + H(+). It participates in cofactor biosynthesis; coenzyme A biosynthesis; CoA from (R)-pantothenate: step 1/5. This chain is Pantothenate kinase, found in Streptococcus mutans serotype c (strain ATCC 700610 / UA159).